A 445-amino-acid chain; its full sequence is Deoxyribodipyrimidine photo-lyase (445 aa).

The region spanning 20–148 (SYVVYWMQAS…QVESNVIVPV (129 aa)) is the Photolyase/cryptochrome alpha/beta domain. A DNA-binding site is contributed by R239.

Belongs to the DNA photolyase class-2 family. It depends on FAD as a cofactor. The cofactor is coenzyme F420-(gamma-Glu)n.

The catalysed reaction is cyclobutadipyrimidine (in DNA) = 2 pyrimidine residues (in DNA).. Functionally, involved in repair of UV radiation-induced DNA damage. Catalyzes the light-dependent monomerization (300-600 nm) of cyclobutyl pyrimidine dimers (in cis-syn configuration), which are formed between adjacent bases on the same DNA strand upon exposure to ultraviolet radiation. The protein is Deoxyribodipyrimidine photo-lyase (phr) of Methanothermobacter thermautotrophicus (strain ATCC 29096 / DSM 1053 / JCM 10044 / NBRC 100330 / Delta H) (Methanobacterium thermoautotrophicum).